Reading from the N-terminus, the 266-residue chain is MMRLNIAPAPWPGAPVVVLSAGLGGGGGYWLAQRAALEAQYQLVSYDHNGTGENAGPLPADYSMATMAQELLSALQAAGITRFALVGHALGALIGLQLALDRPEAVSALVLVNGWLTLSPHTRRCFLVRERLLHAGGAQAWVEAQPLFLYPAEWMAARLPRLEAEDALAISHFQGKENLLKRLQALKQADFSRRAAAIACPTLIVSAADDLLVPASCSRVLQAAIPGSQRVEMPWGGHACNVTDADTFNTILCDGLAAMLPVAREI.

The 225-residue stretch at 15–239 folds into the AB hydrolase-1 domain; that stretch reads PVVVLSAGLG…RVEMPWGGHA (225 aa).

The protein belongs to the AB hydrolase superfamily. Hydrolase RutD family.

It carries out the reaction carbamate + 2 H(+) = NH4(+) + CO2. Its function is as follows. Involved in pyrimidine catabolism. May facilitate the hydrolysis of carbamate, a reaction that can also occur spontaneously. The protein is Putative carbamate hydrolase RutD of Klebsiella variicola (strain At-22).